The following is a 1805-amino-acid chain: Probable serine/threonine-protein kinase MEC1 homolog (1805 aa).

The tract at residues S406 to R425 is disordered. In terms of domain architecture, FAT spans Q928–S1420. Residues V1494–N1793 form the PI3K/PI4K catalytic domain. The interval V1500 to R1506 is G-loop. Residues G1660 to N1668 are catalytic loop. Positions H1680–T1704 are activation loop. The FATC domain occupies D1773–I1805.

It belongs to the PI3/PI4-kinase family. ATM subfamily.

The protein localises to the nucleus. It catalyses the reaction L-seryl-[protein] + ATP = O-phospho-L-seryl-[protein] + ADP + H(+). The enzyme catalyses L-threonyl-[protein] + ATP = O-phospho-L-threonyl-[protein] + ADP + H(+). Its function is as follows. Serine/threonine protein kinase which activates checkpoint signaling upon genotoxic stresses such as ionizing radiation (IR), ultraviolet light (UV), or DNA replication stalling, thereby acting as a DNA damage sensor. Recognizes the substrate consensus sequence [ST]-Q. Recruited to DNA lesions in order to initiate the DNA repair by homologous recombination. Phosphorylates histone H2A to form H2AS128ph (gamma-H2A) at sites of DNA damage, also involved in the regulation of DNA damage response mechanism. Required for cell growth and meiotic recombination. This is Probable serine/threonine-protein kinase MEC1 homolog (MEC1) from Encephalitozoon cuniculi (strain GB-M1) (Microsporidian parasite).